We begin with the raw amino-acid sequence, 555 residues long: Zinc finger and SCAN domain-containing protein 21 (555 aa).

4 disordered regions span residues 1–74, 102–133, 204–243, and 263–354; these read MTKV…SKDK, TIKA…YHDT, LDEP…TQHV, and EEVF…RPAP. 3 tandem repeats follow at residues 18-56, 57-95, and 96-134. Residues 18-134 are 3 X 39 AA approximate tandem repeats; that stretch reads ESMGPSPIKV…FRQFGYHDTP (117 aa). A Glycyl lysine isopeptide (Lys-Gly) (interchain with G-Cter in SUMO2) cross-link involves residue lysine 26. One can recognise an SCAN box domain in the interval 122–204; the sequence is RQRFRQFGYH…TLLEDLEQEL (83 aa). Residues 210 to 240 are compositionally biased toward polar residues; sequence QVSSPPNEQKQSWEKMSTSGTAMESLSSTET. The segment covering 280-302 has biased composition (basic and acidic residues); sequence PQKEDSADEHRSSEEESHADGLK. Glycyl lysine isopeptide (Lys-Gly) (interchain with G-Cter in SUMO2) cross-links involve residues lysine 302 and lysine 313. The span at 316 to 332 shows a compositional bias: basic and acidic residues; it reads SRSERQWANNLERERGT. C2H2-type zinc fingers lie at residues 359–381, 387–409, 415–436, 442–464, 470–492, 498–520, and 526–548; these read YICA…RRTH, YVCT…YRTH, YDCK…QRMH, YQCK…YRIH, YQCN…QRLH, YKCK…HRIH, and YWCS…QRVH. Residue lysine 431 forms a Glycyl lysine isopeptide (Lys-Gly) (interchain with G-Cter in SUMO2) linkage.

It belongs to the krueppel C2H2-type zinc-finger protein family. Expressed predominantly in the spermatocytes and spermatids of adult testes. It is also present at lower levels in the ovary, brain, spleen, embryo and fetus.

The protein resides in the nucleus. Strong transcriptional activator. Plays an important role in spermatogenesis; essential for the progression of meiotic prophase I in spermatocytes. This is Zinc finger and SCAN domain-containing protein 21 (Zscan21) from Mus musculus (Mouse).